The sequence spans 217 residues: Protein-L-isoaspartate O-methyltransferase (217 aa).

Ser-67 is a catalytic residue.

This sequence belongs to the methyltransferase superfamily. L-isoaspartyl/D-aspartyl protein methyltransferase family.

It is found in the cytoplasm. The catalysed reaction is [protein]-L-isoaspartate + S-adenosyl-L-methionine = [protein]-L-isoaspartate alpha-methyl ester + S-adenosyl-L-homocysteine. Functionally, catalyzes the methyl esterification of L-isoaspartyl residues in peptides and proteins that result from spontaneous decomposition of normal L-aspartyl and L-asparaginyl residues. It plays a role in the repair and/or degradation of damaged proteins. The polypeptide is Protein-L-isoaspartate O-methyltransferase (Azoarcus sp. (strain BH72)).